The following is a 539-amino-acid chain: Chaperonin GroEL 1 (539 aa).

ATP-binding positions include 29-32 (TLGP), 86-90 (DGTTT), Gly413, and Asp493.

Belongs to the chaperonin (HSP60) family. In terms of assembly, forms a cylinder of 14 subunits composed of two heptameric rings stacked back-to-back. Interacts with the co-chaperonin GroES.

Its subcellular location is the cytoplasm. The catalysed reaction is ATP + H2O + a folded polypeptide = ADP + phosphate + an unfolded polypeptide.. Its function is as follows. Together with its co-chaperonin GroES, plays an essential role in assisting protein folding. The GroEL-GroES system forms a nano-cage that allows encapsulation of the non-native substrate proteins and provides a physical environment optimized to promote and accelerate protein folding. This Acidothermus cellulolyticus (strain ATCC 43068 / DSM 8971 / 11B) protein is Chaperonin GroEL 1.